The sequence spans 168 residues: RxLR effector protein PITG_12737 (168 aa).

Positions 1-20 (MRACAILVVAAAAVLTGSTA) are cleaved as a signal peptide. The RxLR-dEER signature appears at 54–77 (RRLRKHKTVNTNSEMEYESEAEAR).

It belongs to the RxLR effector family.

The protein resides in the secreted. It localises to the host nucleus. The protein localises to the host cytoplasm. Effector that enhances P.infestans colonization of Nicotiana benthamiana leaves. In Phytophthora infestans (strain T30-4) (Potato late blight agent), this protein is RxLR effector protein PITG_12737.